We begin with the raw amino-acid sequence, 461 residues long: Probable ornithine decarboxylase (461 aa).

A disordered region spans residues 1–35 (MTGTKRNGEEVVNENNNNNVAEETNKKAKVDESST). The segment covering 13–22 (NENNNNNVAE) has biased composition (low complexity). A compositionally biased stretch (basic and acidic residues) spans 23–32 (ETNKKAKVDE). Residue lysine 116 is modified to N6-(pyridoxal phosphate)lysine. Pyridoxal 5'-phosphate is bound by residues serine 247, glycine 284, and 317–320 (EPGR). Substrate is bound at residue 375 to 376 (FD). Residue cysteine 402 is the Proton donor; shared with dimeric partner of the active site. Residue aspartate 403 coordinates substrate. A pyridoxal 5'-phosphate-binding site is contributed by tyrosine 431.

This sequence belongs to the Orn/Lys/Arg decarboxylase class-II family. As to quaternary structure, homodimer. Only the dimer is catalytically active, as the active sites are constructed of residues from both monomers. Pyridoxal 5'-phosphate is required as a cofactor.

The catalysed reaction is L-ornithine + H(+) = putrescine + CO2. Its pathway is amine and polyamine biosynthesis; putrescine biosynthesis via L-ornithine pathway; putrescine from L-ornithine: step 1/1. Its activity is regulated as follows. Inhibited by antizyme (AZ) in response to polyamine levels. AZ inhibits the assembly of the functional homodimer by binding to ODC monomers and targeting them for ubiquitin-independent proteolytic destruction by the 26S proteasome. Functionally, catalyzes the first and rate-limiting step of polyamine biosynthesis that converts ornithine into putrescine, which is the precursor for the polyamines, spermidine and spermine. Polyamines are essential for cell proliferation and are implicated in cellular processes, ranging from DNA replication to apoptosis. This Dictyostelium discoideum (Social amoeba) protein is Probable ornithine decarboxylase (odc).